The sequence spans 73 residues: Putative defensin-like protein 33 (73 aa).

An N-terminal signal peptide occupies residues 1 to 25; it reads MASNKVSFIFILFLCVLSTAEFGEA. Cystine bridges form between Cys33-Cys59, Cys45-Cys68, and Cys49-Cys70.

Belongs to the DEFL family.

It localises to the secreted. The sequence is that of Putative defensin-like protein 33 from Arabidopsis thaliana (Mouse-ear cress).